The chain runs to 169 residues: Peptide deformylase (169 aa).

Fe cation contacts are provided by Cys91 and His133. The active site involves Glu134. His137 provides a ligand contact to Fe cation.

This sequence belongs to the polypeptide deformylase family. Requires Fe(2+) as cofactor.

It catalyses the reaction N-terminal N-formyl-L-methionyl-[peptide] + H2O = N-terminal L-methionyl-[peptide] + formate. Its function is as follows. Removes the formyl group from the N-terminal Met of newly synthesized proteins. Requires at least a dipeptide for an efficient rate of reaction. N-terminal L-methionine is a prerequisite for activity but the enzyme has broad specificity at other positions. The chain is Peptide deformylase from Shigella boydii serotype 18 (strain CDC 3083-94 / BS512).